The sequence spans 129 residues: MIKPNFRHIINGKRLATAIAQDYKTGEILMVAFIDEEAFNKTIQTRKAHYYSTSRNMIWYKGEESGHIQEIKEVLLDCDEDAIIFKVKQVGGACHTGHYSCFYKKLSDDGEVVTEYEDKVFDPEDVYEK.

Aspartate 77 is a Mg(2+) binding site. A Zn(2+)-binding site is contributed by cysteine 78. 2 residues coordinate Mg(2+): aspartate 79 and aspartate 81. Residues cysteine 94 and cysteine 101 each coordinate Zn(2+).

It belongs to the PRA-CH family. In terms of assembly, homodimer. Mg(2+) serves as cofactor. The cofactor is Zn(2+).

The protein resides in the cytoplasm. It catalyses the reaction 1-(5-phospho-beta-D-ribosyl)-5'-AMP + H2O = 1-(5-phospho-beta-D-ribosyl)-5-[(5-phospho-beta-D-ribosylamino)methylideneamino]imidazole-4-carboxamide. It functions in the pathway amino-acid biosynthesis; L-histidine biosynthesis; L-histidine from 5-phospho-alpha-D-ribose 1-diphosphate: step 3/9. Catalyzes the hydrolysis of the adenine ring of phosphoribosyl-AMP. The chain is Phosphoribosyl-AMP cyclohydrolase from Methanosphaera stadtmanae (strain ATCC 43021 / DSM 3091 / JCM 11832 / MCB-3).